The primary structure comprises 315 residues: Coproporphyrin III ferrochelatase (315 aa).

Residues Tyr-13, Arg-30, 46–47, Ser-54, and Tyr-125 contribute to the Fe-coproporphyrin III site; that span reads RY. Fe(2+) contacts are provided by His-183 and Glu-264.

Belongs to the ferrochelatase family.

Its subcellular location is the cytoplasm. It catalyses the reaction Fe-coproporphyrin III + 2 H(+) = coproporphyrin III + Fe(2+). It participates in porphyrin-containing compound metabolism; protoheme biosynthesis. Involved in coproporphyrin-dependent heme b biosynthesis. Catalyzes the insertion of ferrous iron into coproporphyrin III to form Fe-coproporphyrin III. This chain is Coproporphyrin III ferrochelatase, found in Anoxybacillus flavithermus (strain DSM 21510 / WK1).